The chain runs to 265 residues: Mlc titration factor A (265 aa).

His111, His148, His152, and Glu211 together coordinate Zn(2+).

This sequence belongs to the MtfA family. In terms of assembly, interacts with Mlc. Zn(2+) is required as a cofactor.

It is found in the cytoplasm. Involved in the modulation of the activity of the glucose-phosphotransferase system (glucose-PTS). Interacts with the transcriptional repressor Mlc, preventing its interaction with DNA and leading to the modulation of expression of genes regulated by Mlc, including ptsG, which encodes the PTS system glucose-specific EIICB component. In terms of biological role, shows zinc-dependent metallopeptidase activity. This chain is Mlc titration factor A, found in Salmonella typhi.